We begin with the raw amino-acid sequence, 416 residues long: Serine hydroxymethyltransferase (416 aa).

(6S)-5,6,7,8-tetrahydrofolate-binding positions include leucine 121 and 125-127 (GHL). Lysine 229 is subject to N6-(pyridoxal phosphate)lysine.

Belongs to the SHMT family. Homodimer. Pyridoxal 5'-phosphate serves as cofactor.

It localises to the cytoplasm. It carries out the reaction (6R)-5,10-methylene-5,6,7,8-tetrahydrofolate + glycine + H2O = (6S)-5,6,7,8-tetrahydrofolate + L-serine. It functions in the pathway one-carbon metabolism; tetrahydrofolate interconversion. The protein operates within amino-acid biosynthesis; glycine biosynthesis; glycine from L-serine: step 1/1. Its function is as follows. Catalyzes the reversible interconversion of serine and glycine with tetrahydrofolate (THF) serving as the one-carbon carrier. This reaction serves as the major source of one-carbon groups required for the biosynthesis of purines, thymidylate, methionine, and other important biomolecules. Also exhibits THF-independent aldolase activity toward beta-hydroxyamino acids, producing glycine and aldehydes, via a retro-aldol mechanism. This is Serine hydroxymethyltransferase from Azoarcus sp. (strain BH72).